Consider the following 345-residue polypeptide: Chorismate synthase (345 aa).

The protein belongs to the chorismate synthase family. In terms of assembly, homotetramer. Requires FMNH2 as cofactor.

It catalyses the reaction 5-O-(1-carboxyvinyl)-3-phosphoshikimate = chorismate + phosphate. It participates in metabolic intermediate biosynthesis; chorismate biosynthesis; chorismate from D-erythrose 4-phosphate and phosphoenolpyruvate: step 7/7. The polypeptide is Chorismate synthase (aroC) (Carsonella ruddii (strain PV)).